The primary structure comprises 89 residues: Putative regulatory protein CYA_2696 (89 aa).

Belongs to the RemA family.

This chain is Putative regulatory protein CYA_2696, found in Synechococcus sp. (strain JA-3-3Ab) (Cyanobacteria bacterium Yellowstone A-Prime).